Reading from the N-terminus, the 240-residue chain is Cysteine-rich venom protein ablomin (240 aa).

The N-terminal stretch at 1–19 (MIVFIVLPILAAVLQQSSG) is a signal peptide. Positions 38–166 (VDLHNSLRRS…EYSYFYVCQY (129 aa)) constitute an SCP domain. Cystine bridges form between Cys-75–Cys-153, Cys-92–Cys-167, Cys-148–Cys-164, Cys-186–Cys-193, Cys-189–Cys-198, Cys-202–Cys-235, Cys-211–Cys-229, and Cys-220–Cys-233. The ShKT domain occupies 202 to 235 (CTQEDVFTNCNSLVQQSNCQHNYIKTNCPASCFC).

This sequence belongs to the CRISP family. In terms of tissue distribution, expressed by the venom gland.

The protein resides in the secreted. Its function is as follows. Blocks contraction of smooth muscle elicited by high potassium-induced depolarization, but does not block caffeine-stimulated contraction. Since high potassium-treatment activates voltage-gated channels and caffeine exposure activates ryanodine receptors, this toxin may target L-type voltage-gated calcium channels (Cav) (and not ryanodine receptors) on smooth muscle. This toxin also shows a little inhibition on cyclic nucleotide-gated CNGA1 channel. The sequence is that of Cysteine-rich venom protein ablomin from Gloydius blomhoffii (Mamushi).